A 929-amino-acid chain; its full sequence is Type I restriction enzyme SauCOLORF180P endonuclease subunit (929 aa).

One can recognise a Helicase ATP-binding domain in the interval 254-418 (QQATETGNNG…DGRTTADIFG (165 aa)). 268–274 (TTGSGKT) contacts ATP.

It belongs to the HsdR family. As to quaternary structure, the type I restriction/modification system is composed of three polypeptides R, M and S.

It catalyses the reaction Endonucleolytic cleavage of DNA to give random double-stranded fragments with terminal 5'-phosphates, ATP is simultaneously hydrolyzed.. In terms of biological role, the restriction (R) subunit of a type I restriction enzyme that recognizes an undetermined sequence and cleaves a random distance away. Subunit R is required for both nuclease and ATPase activities, but not for modification. After locating a non-methylated recognition site, the enzyme complex serves as a molecular motor that translocates DNA in an ATP-dependent manner until a collision occurs that triggers cleavage. The protein is Type I restriction enzyme SauCOLORF180P endonuclease subunit of Staphylococcus aureus (strain COL).